The sequence spans 202 residues: MTYELPKLPYTYDALEPNFDKETMEIHYTKHHNTYVTKLNEAVAGHPELASKSAEELVTNLDSVPEDIRGAVRNHGGGHANHTLFWSILSPNGGGAPTGNLKAAIESEFGTFDEFKEKFNAAAAARFGSGWAWLVVNDGKLEIVSTANQDSPLSDGKTPVLGLDVWEHAYYLKFQNRRPEYIETFWNVINWDEANKRFDAAK.

His-27, His-82, Asp-164, and His-168 together coordinate Mn(2+).

The protein belongs to the iron/manganese superoxide dismutase family. As to quaternary structure, homodimer. The cofactor is Mn(2+).

The enzyme catalyses 2 superoxide + 2 H(+) = H2O2 + O2. Destroys superoxide anion radicals which are normally produced within the cells and which are toxic to biological systems. The chain is Superoxide dismutase [Mn] (sodA) from Listeria monocytogenes serovar 1/2a (strain ATCC BAA-679 / EGD-e).